A 758-amino-acid chain; its full sequence is MADDGLLLNFSLGDNNIIQPETKLKGGTWRDRLSAKKIAKHHAKGPRTAGDEDSTPRAPRNPNRIEVPSSRPTKRQRTDGGDSGKQQSHTHPHSNQPRQFISSLFTKNPEPQKVEEVKEEGHVEDAKPTNAPLIDGLDTFTNLGLSPSLAAHLLTKLELKAPTAIQKASISQLLKEEGDAFIQAETGSGKTLAYLLPLVQRIMALSKPGAQTDAKGQPIVHRDSGLFAIVLAPTRELCKQISVVLENLLRCAHWIVAGTVIGGEKKKSEKARLRKGLNILVATPGRLADHLDNTQALDVSNVRWLVLDEGDRLMELGFEEEIQGIVKKLDARQRPSRIPGVPTRRTTILCSATLKMSVQKLGEISLKDAVHIKADPEDEDEKARRSKEEESAYRVPAQLKQSYAVVAAKLRLVTLTAFFKRTFMRKGSVMKAIIFVSCADSVDFHFEVFTRKQAKEDGDESSDTDKSEDKPPSSPHGTIAPATAFSNPSNPVTLFRLHGSLPQNVRTSTLGAFAKNKEASVLICTDVASRGLDLPNVDLVVEYDPAFSAEDHLHRIGRTARVGRDGRALIFLQPGCEENYVEVLKRGYRDGGKALTRADANDILKRGFGGNVESGNKDWETKATDWQCEIERWALENPEYLEMARRAFQSHIRAYATHIAAERSMFNIKELHLGHLAKAFALRDRPSKINVPGLRQGKEETKKDFKAERNSAAGKKRKAGGTDLADDIPSANNTATAAQKMRAKMKEHISGANEFNLA.

Disordered stretches follow at residues 26-99 and 111-130; these read GGTW…QPRQ and PQKV…KPTN. A compositionally biased stretch (basic residues) spans 35-45; that stretch reads AKKIAKHHAKG. The span at 84-99 shows a compositional bias: polar residues; sequence GKQQSHTHPHSNQPRQ. Residues 111–127 are compositionally biased toward basic and acidic residues; it reads PQKVEEVKEEGHVEDAK. Residues 138-167 carry the Q motif motif; the sequence is DTFTNLGLSPSLAAHLLTKLELKAPTAIQK. The Helicase ATP-binding domain occupies 171 to 372; sequence SQLLKEEGDA…EISLKDAVHI (202 aa). 184–191 provides a ligand contact to ATP; it reads AETGSGKT. The DEAD box signature appears at 308-311; that stretch reads DEGD. The region spanning 398–603 is the Helicase C-terminal domain; the sequence is QLKQSYAVVA…ALTRADANDI (206 aa). Disordered stretches follow at residues 455–483 and 691–758; these read KEDG…APAT and VPGL…FNLA. Residues 696–709 show a composition bias toward basic and acidic residues; sequence QGKEETKKDFKAER.

The protein belongs to the DEAD box helicase family. DDX31/DBP7 subfamily.

The protein resides in the nucleus. The protein localises to the nucleolus. It catalyses the reaction ATP + H2O = ADP + phosphate + H(+). Its function is as follows. ATP-binding RNA helicase involved in the biogenesis of 60S ribosomal subunits and is required for the normal formation of 25S and 5.8S rRNAs. This Neosartorya fischeri (strain ATCC 1020 / DSM 3700 / CBS 544.65 / FGSC A1164 / JCM 1740 / NRRL 181 / WB 181) (Aspergillus fischerianus) protein is ATP-dependent RNA helicase dbp7 (dbp7).